The following is a 204-amino-acid chain: Probable molybdenum cofactor guanylyltransferase (204 aa).

GTP is bound by residues 10–12 (LSG), lysine 22, aspartate 75, and aspartate 104. Aspartate 104 serves as a coordination point for Mg(2+).

This sequence belongs to the MobA family. It depends on Mg(2+) as a cofactor.

Its subcellular location is the cytoplasm. It carries out the reaction Mo-molybdopterin + GTP + H(+) = Mo-molybdopterin guanine dinucleotide + diphosphate. Its function is as follows. Transfers a GMP moiety from GTP to Mo-molybdopterin (Mo-MPT) cofactor (Moco or molybdenum cofactor) to form Mo-molybdopterin guanine dinucleotide (Mo-MGD) cofactor. The protein is Probable molybdenum cofactor guanylyltransferase of Methanocaldococcus jannaschii (strain ATCC 43067 / DSM 2661 / JAL-1 / JCM 10045 / NBRC 100440) (Methanococcus jannaschii).